The primary structure comprises 326 residues: Beta-ketoacyl-[acyl-carrier-protein] synthase III (326 aa).

Residues cysteine 112 and histidine 251 contribute to the active site. Residues glutamine 252–arginine 256 are ACP-binding. The active site involves asparagine 281.

Belongs to the thiolase-like superfamily. FabH family. In terms of assembly, homodimer.

The protein localises to the cytoplasm. It catalyses the reaction malonyl-[ACP] + acetyl-CoA + H(+) = 3-oxobutanoyl-[ACP] + CO2 + CoA. The protein operates within lipid metabolism; fatty acid biosynthesis. In terms of biological role, catalyzes the condensation reaction of fatty acid synthesis by the addition to an acyl acceptor of two carbons from malonyl-ACP. Catalyzes the first condensation reaction which initiates fatty acid synthesis and may therefore play a role in governing the total rate of fatty acid production. Possesses both acetoacetyl-ACP synthase and acetyl transacylase activities. Its substrate specificity determines the biosynthesis of branched-chain and/or straight-chain of fatty acids. The sequence is that of Beta-ketoacyl-[acyl-carrier-protein] synthase III from Clostridium botulinum (strain Loch Maree / Type A3).